The chain runs to 227 residues: DNA repair protein RecO (227 aa).

The protein belongs to the RecO family.

In terms of biological role, involved in DNA repair and RecF pathway recombination. The polypeptide is DNA repair protein RecO (Pseudomonas putida (strain ATCC 700007 / DSM 6899 / JCM 31910 / BCRC 17059 / LMG 24140 / F1)).